Reading from the N-terminus, the 436-residue chain is MKILQYKSIENVQYSKNILYFCGHSMGLQPKSTKIYINKILNQWKNLGVLSYHYGELPASYCDEQLSIDCAQWIVNAKFNEVSITCNLTVNMHVLIAKFYRPTNEKYCILIENDIFPSDYYVLESHIQWHGYNTNDCFIKLKPRLHEYCLRNDDILPEIIKNQHRIALIWLPGIQYITGQLFNMKLITEWGHQYAKCPVGWDLAHAVGNIPLYLHDWNIDMAVWCSYKYLNGSPGAIGGLFIHEKHHHEEGSYGPKFIEFTNNNNITIFNNINGPQLTGWWSHRSETRFNMTGNMELAKGANAYRLSNPPLLLAAALTVSVNIIKSCGGMINLREKSIKLTDYLEYLITNSSLALKHDHYCLVTPSNSNERGAQLTISVTHMNIQVVYENLLKLGVICDYRLPNFLRITPIPLYNSFEDVYLLAKCLHQVLNDTLN.

Residues Leu-88, Thr-89, 116–119 (FPSD), Asp-202, His-205, and Tyr-227 each bind pyridoxal 5'-phosphate. Lys-228 carries the post-translational modification N6-(pyridoxal phosphate)lysine. The pyridoxal 5'-phosphate site is built by Trp-280 and Asn-308.

Belongs to the kynureninase family. As to quaternary structure, homodimer. Pyridoxal 5'-phosphate is required as a cofactor.

It localises to the cytoplasm. The catalysed reaction is L-kynurenine + H2O = anthranilate + L-alanine + H(+). It carries out the reaction 3-hydroxy-L-kynurenine + H2O = 3-hydroxyanthranilate + L-alanine + H(+). It participates in amino-acid degradation; L-kynurenine degradation; L-alanine and anthranilate from L-kynurenine: step 1/1. The protein operates within cofactor biosynthesis; NAD(+) biosynthesis; quinolinate from L-kynurenine: step 2/3. Its function is as follows. Catalyzes the cleavage of L-kynurenine (L-Kyn) and L-3-hydroxykynurenine (L-3OHKyn) into anthranilic acid (AA) and 3-hydroxyanthranilic acid (3-OHAA), respectively. This chain is Kynureninase, found in Schistosoma japonicum (Blood fluke).